A 1045-amino-acid chain; its full sequence is Extracellular serine protease (1045 aa).

The first 27 residues, 1–27 (MILNKKLKLAYCVFLGCYGLSLHSSLA), serve as a signal peptide directing secretion. The Peptidase S8 domain maps to 49–396 (QWGLEAISAE…WGRVNLRDAI (348 aa)). Active-site charge relay system residues include D76, H112, and S341. Positions 646-1045 (SLASTENDKE…SVNAGLTWRF (400 aa)) are excised as a propeptide. The Autotransporter domain occupies 769–1045 (IKADDNGAWA…SVNAGLTWRF (277 aa)).

The protein belongs to the peptidase S8 family.

Its subcellular location is the secreted. The sequence is that of Extracellular serine protease from Serratia marcescens.